Here is a 391-residue protein sequence, read N- to C-terminus: Sister chromatid cohesion protein DCC1 (391 aa).

It belongs to the DCC1 family. In terms of assembly, component of the ctf18-RFC complex which consists of ctf18, ctf8, dscc1 and the RFC complex.

Its subcellular location is the nucleus. Its function is as follows. Loads pcna onto primed templates regulating velocity, spacing and restart activity of replication forks. May couple DNA replication to sister chromatid cohesion. This Danio rerio (Zebrafish) protein is Sister chromatid cohesion protein DCC1 (dscc1).